We begin with the raw amino-acid sequence, 816 residues long: Phosphatidylinositol 4-kinase beta (816 aa).

The tract at residues 1 to 30 is disordered; that stretch reads MGDTVVEPAPLKPTSEPTSGPPGNNGGSLL. Glycine 2 bears the N-acetylglycine mark. The PIK helical domain occupies 29–242; the sequence is LLSVITEGVG…GTKLRKLILS (214 aa). The tract at residues 41–67 is interaction with ACBD3; it reads SVIDPEVAQKACQEVLEKVKLLHGGVA. Disordered stretches follow at residues 101-120 and 248-318; these read EDEM…RRRR and AHRK…SFSS. Serine 258 is modified (phosphoserine). At threonine 263 the chain carries Phosphothreonine. Phosphoserine is present on residues serine 266, serine 275, serine 277, serine 284, and serine 294. Composition is skewed to polar residues over residues 278 to 297 and 306 to 318; these read DATA…SNPK and SSST…SFSS. Phosphoserine is present on serine 428. Phosphothreonine is present on threonine 438. Serine 511 carries the post-translational modification Phosphoserine. A phosphothreonine mark is found at threonine 517 and threonine 519. One can recognise a PI3K/PI4K catalytic domain in the interval 535-801; it reads EPWQEKVRRI…MVDGSMRSIT (267 aa). The segment at 541-547 is G-loop; sequence VRRIREG. The tract at residues 668–676 is catalytic loop; the sequence is QVKDRHNGN. An activation loop region spans residues 687 to 711; sequence HIDFGFILSSSPRNLGFETSAFKLT.

This sequence belongs to the PI3/PI4-kinase family. Type III PI4K subfamily. As to quaternary structure, interacts with ARF1 and ARF3 in the Golgi complex, but not with ARF4, ARF5 or ARF6. Interacts with NCS1/FREQ in a calcium-independent manner. Interacts with CALN1/CABP8 and CALN2/CABP7; in a calcium-dependent manner; this interaction competes with NCS1/FREQ binding. Interacts with ACBD3. Interacts with ARMH3, YWHAB, YWHAE, YWHAG, YWHAH, YWHAQ, YWHAZ and SFN. Interacts with GGA2 (via VHS domain); the interaction is important for PI4KB location at the Golgi apparatus membrane. Interacts with ATG9A. In terms of assembly, (Microbial infection) Interacts with Aichi virus protein 3A. Part of a complex Aichi virus protein 3A/ACBD3/PI4KB that allows the synthesis of PI4P at the viral RNA replication sites. The cofactor is Mg(2+). Requires Mn(2+) as cofactor. As to expression, widely expressed with highest levels in heart, skeletal muscle, pancreas, testis and ovary. Weakly expressed in liver. Expressed in the innear ear in the epithelium of the spinal organ of corti.

It localises to the endomembrane system. The protein localises to the mitochondrion outer membrane. The protein resides in the rough endoplasmic reticulum membrane. It is found in the golgi apparatus. Its subcellular location is the golgi apparatus membrane. It localises to the cytoplasm. The protein localises to the perinuclear region. It catalyses the reaction a 1,2-diacyl-sn-glycero-3-phospho-(1D-myo-inositol) + ATP = a 1,2-diacyl-sn-glycero-3-phospho-(1D-myo-inositol 4-phosphate) + ADP + H(+). Its activity is regulated as follows. Inhibited by wortmannin and adenosine. Increased kinase activity upon interaction with NCS1/FREQ. (Microbial infection) Activated by Aichi virus protein 3A, this activation is sensitized by ACBD3. In terms of biological role, phosphorylates phosphatidylinositol (PI) in the first committed step in the production of the second messenger inositol-1,4,5,-trisphosphate (PIP). May regulate Golgi disintegration/reorganization during mitosis, possibly via its phosphorylation. Involved in Golgi-to-plasma membrane trafficking. May play an important role in the inner ear development. Functionally, (Microbial infection) Plays an essential role in Aichi virus RNA replication. Recruited by ACBD3 at the viral replication sites. (Microbial infection) Required for cellular spike-mediated entry of human coronavirus SARS-CoV. The protein is Phosphatidylinositol 4-kinase beta of Homo sapiens (Human).